The following is a 403-amino-acid chain: Phosphoglycerate kinase (403 aa).

Residues 22–24, R37, 60–63, R119, and R156 each bind substrate; these read DLN and HLGR. Residues K206, G302, E333, and 359–362 each bind ATP; that span reads GGDS.

Belongs to the phosphoglycerate kinase family. Monomer.

The protein resides in the cytoplasm. The enzyme catalyses (2R)-3-phosphoglycerate + ATP = (2R)-3-phospho-glyceroyl phosphate + ADP. Its pathway is carbohydrate degradation; glycolysis; pyruvate from D-glyceraldehyde 3-phosphate: step 2/5. This Leifsonia xyli subsp. xyli (strain CTCB07) protein is Phosphoglycerate kinase.